The sequence spans 490 residues: Cyclin-A2-1 (490 aa).

Residues 34-76 (FAPSVSLPARTERKQTAKGKTKRGALDEITSASTATSAPQPKR) are disordered. Residues 63 to 72 (TSASTATSAP) show a composition bias toward polar residues.

The protein belongs to the cyclin family. Cyclin AB subfamily.

This is Cyclin-A2-1 (CYCA2-1) from Oryza sativa subsp. japonica (Rice).